Reading from the N-terminus, the 330-residue chain is Class III chitinase ARB_03514 (330 aa).

Residues 1–22 form the signal peptide; that stretch reads MSSVKNILSFVALFAGVKTAYA. Residues 23 to 314 enclose the GH18 domain; that stretch reads GLNSPGHNNV…SAVKGALSAG (292 aa). 2 N-linked (GlcNAc...) asparagine glycosylation sites follow: N61 and N135. Residue E155 is the Proton donor of the active site. N-linked (GlcNAc...) asparagine glycans are attached at residues N278 and N302.

This sequence belongs to the glycosyl hydrolase 18 family. Chitinase class III subfamily. In terms of assembly, monomer.

Its subcellular location is the secreted. It carries out the reaction Random endo-hydrolysis of N-acetyl-beta-D-glucosaminide (1-&gt;4)-beta-linkages in chitin and chitodextrins.. Functionally, secreted chitinase involved in the degradation of chitin, a component of the cell walls of fungi and exoskeletal elements of some animals (including worms and arthropods). Plays a morphogenetic role during apical growth, cell division and differentiation (cell wall morphogenesis). The protein is Class III chitinase ARB_03514 of Arthroderma benhamiae (strain ATCC MYA-4681 / CBS 112371) (Trichophyton mentagrophytes).